A 229-amino-acid chain; its full sequence is Large ribosomal subunit protein uL1 (229 aa).

This sequence belongs to the universal ribosomal protein uL1 family. In terms of assembly, part of the 50S ribosomal subunit.

In terms of biological role, binds directly to 23S rRNA. The L1 stalk is quite mobile in the ribosome, and is involved in E site tRNA release. Functionally, protein L1 is also a translational repressor protein, it controls the translation of the L11 operon by binding to its mRNA. The chain is Large ribosomal subunit protein uL1 from Streptococcus pyogenes serotype M1.